Reading from the N-terminus, the 386-residue chain is MDIVLEICDYYLFDKVYADVFPKDGPVHEYLKPAIQSFSEINFPKLQNWDSFDTNSTLISSNNFNISNVNPATIPGYLLSKIASYQDKSEIYGLAPKFFPATEFIDTSFLSRSNIFREVLSLFIITTLFGWLLYFIVAYLSYVFVFDKKIFNHPRYLKNQMSLEIKRATSAIPVMVLLTIPFFLLELHGYSFLYEEINESTGGYKAILWQIPKFILFTDCGIYFLHRWLHWPSVYKALHKPHHKWIVCTPFASHAFHPVDGFFQSLPYHLYPLLFPLHKVLYLLLFTFVNFWTVMIHDGSYWSNDPVVNGTACHTVHHLYFNYNYGQFTTLWDRLGNSYRRPDDSLFVKDQKKEEEKKIWKEQTRQMEEIRGEVEGKVDDREYIDQ.

The next 3 membrane-spanning stretches (helical) occupy residues V119–Y139, I172–F192, and A206–H226. The Fatty acid hydroxylase domain occupies F214 to N337. A Histidine box-1 motif is present at residues H226–H230. The Histidine box-2 signature appears at H239–H243. The chain crosses the membrane as a helical span at residues P272 to W292. A Histidine box-3 motif is present at residues H314 to H318.

Belongs to the sterol desaturase family. Requires Fe cation as cofactor.

Its subcellular location is the endoplasmic reticulum membrane. It catalyses the reaction a Delta(7)-sterol + 2 Fe(II)-[cytochrome b5] + O2 + 2 H(+) = a Delta(5),Delta(7)-sterol + 2 Fe(III)-[cytochrome b5] + 2 H2O. It functions in the pathway steroid metabolism; ergosterol biosynthesis; ergosterol from zymosterol: step 3/5. In terms of biological role, catalyzes the introduction of a C-5 double bond in the B ring of ergosterol. May contribute to the regulation of ergosterol biosynthesis. The protein is Delta(7)-sterol 5(6)-desaturase (ERG3) of Candida dubliniensis (strain CD36 / ATCC MYA-646 / CBS 7987 / NCPF 3949 / NRRL Y-17841) (Yeast).